A 591-amino-acid chain; its full sequence is L-fucose isomerase (591 aa).

Catalysis depends on proton acceptor residues Glu337 and Asp361. Positions 337, 361, and 528 each coordinate Mn(2+).

Belongs to the L-fucose isomerase family. Homohexamer. It depends on Mn(2+) as a cofactor.

It localises to the cytoplasm. It carries out the reaction L-fucose = L-fuculose. It functions in the pathway carbohydrate degradation; L-fucose degradation; L-lactaldehyde and glycerone phosphate from L-fucose: step 1/3. In terms of biological role, converts the aldose L-fucose into the corresponding ketose L-fuculose. This Escherichia coli O139:H28 (strain E24377A / ETEC) protein is L-fucose isomerase.